The primary structure comprises 327 residues: Movement protein (327 aa).

The stretch at 252 to 311 (DLTREEREKAAQLEMLRKTREVHTQRSAEEMKRRQAELAKDTQRKLAEEAKAVTEKRKNM) forms a coiled coil. 2 disordered regions span residues 271–294 (REVH…KDTQ) and 307–327 (KRKN…FDSV). The span at 313–327 (GVNSSNIKFGNFDSV) shows a compositional bias: polar residues.

The protein resides in the host cell wall. Its subcellular location is the host cytoplasm. Its function is as follows. Transports viral genome to neighboring plant cells directly through plasmosdesmata, without any budding. The movement protein allows efficient cell to cell propagation, by bypassing the host cell wall barrier. This Hordeum vulgare (Barley) protein is Movement protein.